The following is a 278-amino-acid chain: Bicarbonate transport ATP-binding protein CmpD (278 aa).

Residues 21–254 (LIVENVSKIY…RPRDRERIME (234 aa)) enclose the ABC transporter domain. An ATP-binding site is contributed by 57–64 (GHSGCGKS).

Belongs to the ABC transporter superfamily. Nitrate/nitrite/cyanate uptake transporter (NitT) (TC 3.A.1.16) family. As to quaternary structure, the complex is composed of two ATP-binding proteins (CmpC and CmpD), a transmembrane protein (CmpB) and a solute-binding protein (CmpA).

The protein resides in the cell inner membrane. Its function is as follows. Part of the ABC transporter complex CmpABCD involved in bicarbonate transport. Responsible for energy coupling to the transport system. The chain is Bicarbonate transport ATP-binding protein CmpD (cmpD) from Synechococcus elongatus (strain ATCC 33912 / PCC 7942 / FACHB-805) (Anacystis nidulans R2).